A 26-amino-acid chain; its full sequence is M-poneritoxin-Ng1d (26 aa).

Expressed by the venom gland.

The protein resides in the secreted. It localises to the target cell membrane. In terms of biological role, has a broad spectrum of activity against both Gram-positive and Gram-negative bacteria and S.cerevisiae. Has insecticidal and hemolytic activities. May act by disrupting the integrity of the bacterial cell membrane. This chain is M-poneritoxin-Ng1d, found in Neoponera goeldii (Ponerine ant).